The chain runs to 166 residues: Alanine racemase (166 aa).

The active-site Proton acceptor; specific for L-alanine is Y62. Residue M110 participates in substrate binding.

This sequence belongs to the alanine racemase family. Pyridoxal 5'-phosphate serves as cofactor.

It carries out the reaction L-alanine = D-alanine. The protein operates within amino-acid biosynthesis; D-alanine biosynthesis; D-alanine from L-alanine: step 1/1. In terms of biological role, catalyzes the interconversion of L-alanine and D-alanine. May also act on other amino acids. The polypeptide is Alanine racemase (alr) (Piscirickettsia salmonis).